The primary structure comprises 349 residues: DNA polymerase IV (349 aa).

A UmuC domain is found at 7–188; it reads IIHIDMDYFF…LPVKKLFGVG (182 aa). Mg(2+) contacts are provided by aspartate 11 and aspartate 106. Residue glutamate 107 is part of the active site.

This sequence belongs to the DNA polymerase type-Y family. As to quaternary structure, monomer. Mg(2+) is required as a cofactor.

The protein resides in the cytoplasm. The catalysed reaction is DNA(n) + a 2'-deoxyribonucleoside 5'-triphosphate = DNA(n+1) + diphosphate. Poorly processive, error-prone DNA polymerase involved in untargeted mutagenesis. Copies undamaged DNA at stalled replication forks, which arise in vivo from mismatched or misaligned primer ends. These misaligned primers can be extended by PolIV. Exhibits no 3'-5' exonuclease (proofreading) activity. May be involved in translesional synthesis, in conjunction with the beta clamp from PolIII. This chain is DNA polymerase IV, found in Francisella tularensis subsp. holarctica (strain OSU18).